The sequence spans 547 residues: Vacuolar fusion protein MON1 homolog B (547 aa).

Met1 carries the post-translational modification N-acetylmethionine. The disordered stretch occupies residues Met1–Arg106. Residues Pro57–Ser66 show a composition bias toward pro residues. Phosphoserine occurs at positions 59 and 61.

It belongs to the MON1/SAND family. Interacts with CCNT2; down-regulates CCNT2-mediated activation of viral promoters during herpes simplex virus 1/HHV-1 infection. Found in a complex with RMC1, CCZ1 MON1A and MON1B.

The chain is Vacuolar fusion protein MON1 homolog B (MON1B) from Macaca fascicularis (Crab-eating macaque).